Consider the following 841-residue polypeptide: MSFTPMMKQYLDIKKQYSDCLLFFRLGDFYELFFEDAVIASRELEIVLTGRDAGQEERVPMCGVPYHSAQGYIAKLLSRGYKVAICEQVEDPKKAKGLVKREVTKIYTPGTVTEEFFLQEKTNNYIIALAEKDGLIALAVAEVSTGYLGITSVDEGKIEVLASEIRRLAPTEAVVLKNFKNNFLLKDITGIVNYLEKLPAEEIEIAFKGPEASKEAYKILISYLKRIEPAVLSIFGQPEFYQIDSYLYFDESTRKNLEILRNREDNSSSLLGIIDFTQTAMGARKLKEELTKPLLNLKAIADRLDAVEILVNDYELRENLRENLKNLYDLERLSIKLVCGTINPKDLIKIKQSLPQIWHIKNSINHVKNKSVLFAEIYKNLPEMREVYNLIDKSIVDDPPVSPKDGGIIKNGYNPTVDEYRKAREEGQDWIINYEKKERERTGIKSLKVNYNKVFGYFIEVTKANLHLVPADYQRKQTMVNAERFITEELKHYENLILGASEKLANLEYELFCEIRSEILKYQEDLKRAASAVALLDFLISLAVAAIEYDFTRPVITAEPVLEIKNGRHPVVEKSVGRANFVPNDLYLDTKENSLLLITGPNMAGKSTYMRQAALIVILAQIGSFVPAEYARVGLVDKILTRIGATDDLAKGQSTFMVEMIECNNILRNATSRSLILLDEVGRGTSTYDGISIAEAIIEYIQKKIKARTLFSTHYHELTGLEGEIPGVKNFTVLVQEKGEEVKFLHKVVPGKTDKSYGIYVAKLAGLPREVVERAYEILARFEDKGLKVKDTVPVQLSLFEEKPEPSGVIKELIELDLIRMTPLEALNKLYELRQKALGEK.

ATP is bound at residue 600 to 607; sequence GPNMAGKS.

The protein belongs to the DNA mismatch repair MutS family.

Functionally, this protein is involved in the repair of mismatches in DNA. It is possible that it carries out the mismatch recognition step. This protein has a weak ATPase activity. The chain is DNA mismatch repair protein MutS from Carboxydothermus hydrogenoformans (strain ATCC BAA-161 / DSM 6008 / Z-2901).